Here is an 84-residue protein sequence, read N- to C-terminus: MAHKKGAGSTKNGRDSNAKRLGVKRFGGETVKAGSILIRQRGMKFKPGVNVGYGKDFTLFALIDGTVKFDYKDAQHKRVNIITQ.

Positions 1 to 23 (MAHKKGAGSTKNGRDSNAKRLGV) are disordered.

This sequence belongs to the bacterial ribosomal protein bL27 family.

Its subcellular location is the plastid. It is found in the chloroplast. The sequence is that of Large ribosomal subunit protein bL27c from Thalassiosira pseudonana (Marine diatom).